A 706-amino-acid chain; its full sequence is ATP-dependent DNA helicase HMI1, mitochondrial (706 aa).

The region spanning 5–277 is the UvrD-like helicase ATP-binding domain; that stretch reads TPSQWKVINK…LKLFDNFRST (273 aa). ATP is bound by residues 29–34 and arginine 275; that span reads GSGKTL. In terms of domain architecture, UvrD-like helicase C-terminal spans 278 to 593; that stretch reads PEIISLASKI…KLSTIHSAKG (316 aa). Positions 693 to 706 are cleaved as a propeptide — cleaved upon import into mitochondrion; it reads YSSLRGCKSVFRRI.

The protein belongs to the helicase family. UvrD subfamily. Mg(2+) serves as cofactor.

It is found in the mitochondrion inner membrane. It catalyses the reaction Couples ATP hydrolysis with the unwinding of duplex DNA by translocating in the 3'-5' direction.. The catalysed reaction is ATP + H2O = ADP + phosphate + H(+). In terms of biological role, required for mitochondrial genome maintenance and mitochondrial DNA inheritance. The sequence is that of ATP-dependent DNA helicase HMI1, mitochondrial (HMI1) from Saccharomyces cerevisiae (strain ATCC 204508 / S288c) (Baker's yeast).